Reading from the N-terminus, the 148-residue chain is Deoxyuridine 5'-triphosphate nucleotidohydrolase (148 aa).

Substrate contacts are provided by residues 68-70 (RSG), Asn81, 85-87 (TID), and Lys95.

It belongs to the dUTPase family. Requires Mg(2+) as cofactor.

The catalysed reaction is dUTP + H2O = dUMP + diphosphate + H(+). Its pathway is pyrimidine metabolism; dUMP biosynthesis; dUMP from dCTP (dUTP route): step 2/2. Functionally, this enzyme is involved in nucleotide metabolism: it produces dUMP, the immediate precursor of thymidine nucleotides and it decreases the intracellular concentration of dUTP so that uracil cannot be incorporated into DNA. In Rickettsia canadensis (strain McKiel), this protein is Deoxyuridine 5'-triphosphate nucleotidohydrolase.